The chain runs to 95 residues: Large ribosomal subunit protein bL27 (95 aa).

A propeptide spanning residues methionine 1 to phenylalanine 10 is cleaved from the precursor. Positions histidine 12–glutamine 38 are disordered.

Belongs to the bacterial ribosomal protein bL27 family. In terms of processing, the N-terminus is cleaved by ribosomal processing cysteine protease Prp.

In Enterococcus faecalis (strain ATCC 700802 / V583), this protein is Large ribosomal subunit protein bL27.